A 1171-amino-acid chain; its full sequence is MIHPREVLEGPILAVSRQTKSVVDIPGAPKRYSFAKVSAPIEVPGLLDLQLDSFAWLIGTPEWRARQQEEFGEGARITSGLENILEELSPIQDYSGNMSLSLSEPRFEPVKNTIDEAKEKDINYAAPLYVTAEFVNNTTGEIKSQTVFIGDFPMMTDKGTFIINGTERVVVSQLVRSPGVYFDQTIDKSTERPLHAVKVIPSRGAWLEFDVDKRDSVGVRIDRKRRQPVTVLLKALGWTTEQITERFGFSEIMMSTLESDGVANTDEALLEIYRKQRPGEQPTRDLAQSLLDNSFFKAKRYDLAKVGRYKINRKLGLGGDNDGLMTLTEEDIATAIEYLVRLHAGERVMTSPTGEEIPVETDDIDHFGNRRLRTVGELIQNQVRVGLSRMERVVRERMTTQDAESITPTSLINVRPVSAAIREFFGTSQLSQFMDQNNSLSGLTHKRRLSALGPGGLSRERAGIEVRDVHPSHYGRMCPIETPEGPNIGLIGSLASYARVNPFGFIETPYRRVIDGKLTDQIDYLTADEEDRFVVAQANTHYDEDGVITDESVTVRLKDGDIAMVSRTDVDYMDVSPRQMVSVGTAMIPFLEHDDANRALMGANMQKQAVPLVRAEAPFVGTGMELRAAYDAGDLVITPKAGVVENVTADIVTIMDDEGKRDTYVLRKFQRTNQGTSYNQKPLVNQGDRVEAGQVIADGPGTFNGEMSLGRNLLVAFMPWEGHNYEDAIILNQNIVEQDILTSIHIEEHEIDARDTKLGAEEITRDIPNVSEEVLKDLDERGIVRIGADVRDGDILVGKVTPKGETELTPEERLLRAIFGEKAREVRDTSMKVPHGETGKVIGVRRFSREDDDDLAPGVNEMIRVYVAQKRKIQDGDKLAGRHGNKGVVGKILPQEDMPFLPDGTPVDIILNTHGVPRRMNIGQVLETHLGWLAAAGWSVDPEDPKNAELIKTLPKELYDVPAGSLTATPVFDGASNEELAGLLANSRPNRDGDVMVNADGKATLIDGRSGEPYPYPVSIGYMYMLKLHHLVDEKIHARSTGPYSMITQQPLGGKAQFGGQRFGEMEVWAMQAYGAAYTLQELLTIKSDDVVGRVKVYEAIVKGENIPDPGIPESFKVLLKELQSLCLNVEVLSADGTPMELAGDDDDFDQAGASLGINLSRDERSDADTA.

It belongs to the RNA polymerase beta chain family. As to quaternary structure, the RNAP catalytic core consists of 2 alpha, 1 beta, 1 beta' and 1 omega subunit. When a sigma factor is associated with the core the holoenzyme is formed, which can initiate transcription.

The catalysed reaction is RNA(n) + a ribonucleoside 5'-triphosphate = RNA(n+1) + diphosphate. DNA-dependent RNA polymerase catalyzes the transcription of DNA into RNA using the four ribonucleoside triphosphates as substrates. The sequence is that of DNA-directed RNA polymerase subunit beta from Corynebacterium efficiens (strain DSM 44549 / YS-314 / AJ 12310 / JCM 11189 / NBRC 100395).